Consider the following 202-residue polypeptide: Imidazoleglycerol-phosphate dehydratase (202 aa).

The protein belongs to the imidazoleglycerol-phosphate dehydratase family.

The protein resides in the cytoplasm. The enzyme catalyses D-erythro-1-(imidazol-4-yl)glycerol 3-phosphate = 3-(imidazol-4-yl)-2-oxopropyl phosphate + H2O. It participates in amino-acid biosynthesis; L-histidine biosynthesis; L-histidine from 5-phospho-alpha-D-ribose 1-diphosphate: step 6/9. This Acinetobacter baumannii (strain SDF) protein is Imidazoleglycerol-phosphate dehydratase.